The following is a 280-amino-acid chain: tRNA pseudouridine synthase A (280 aa).

Asp60 functions as the Nucleophile in the catalytic mechanism. Position 119 (Tyr119) interacts with substrate.

It belongs to the tRNA pseudouridine synthase TruA family. In terms of assembly, homodimer.

The enzyme catalyses uridine(38/39/40) in tRNA = pseudouridine(38/39/40) in tRNA. In terms of biological role, formation of pseudouridine at positions 38, 39 and 40 in the anticodon stem and loop of transfer RNAs. This is tRNA pseudouridine synthase A from Treponema pallidum (strain Nichols).